Consider the following 272-residue polypeptide: Thiazole synthase (272 aa).

Catalysis depends on Lys-111, which acts as the Schiff-base intermediate with DXP. 1-deoxy-D-xylulose 5-phosphate-binding positions include Gly-172, 198–199 (AG), and 220–221 (NS). The disordered stretch occupies residues 249-272 (SGRLPRRDQASASSPTTGLVQSPQ). The span at 258–272 (ASASSPTTGLVQSPQ) shows a compositional bias: polar residues.

Belongs to the ThiG family. In terms of assembly, homotetramer. Forms heterodimers with either ThiH or ThiS.

The protein resides in the cytoplasm. The enzyme catalyses [ThiS sulfur-carrier protein]-C-terminal-Gly-aminoethanethioate + 2-iminoacetate + 1-deoxy-D-xylulose 5-phosphate = [ThiS sulfur-carrier protein]-C-terminal Gly-Gly + 2-[(2R,5Z)-2-carboxy-4-methylthiazol-5(2H)-ylidene]ethyl phosphate + 2 H2O + H(+). The protein operates within cofactor biosynthesis; thiamine diphosphate biosynthesis. Catalyzes the rearrangement of 1-deoxy-D-xylulose 5-phosphate (DXP) to produce the thiazole phosphate moiety of thiamine. Sulfur is provided by the thiocarboxylate moiety of the carrier protein ThiS. In vitro, sulfur can be provided by H(2)S. This is Thiazole synthase from Synechococcus sp. (strain CC9605).